A 217-amino-acid chain; its full sequence is 3,4-dihydroxy-2-butanone 4-phosphate synthase (217 aa).

Residues 37–38 (RE), D42, 150–154 (RRGHT), and E174 contribute to the D-ribulose 5-phosphate site. E38 contacts Mg(2+). H153 contributes to the Mg(2+) binding site.

The protein belongs to the DHBP synthase family. Homodimer. The cofactor is Mg(2+). Mn(2+) serves as cofactor.

It carries out the reaction D-ribulose 5-phosphate = (2S)-2-hydroxy-3-oxobutyl phosphate + formate + H(+). It functions in the pathway cofactor biosynthesis; riboflavin biosynthesis; 2-hydroxy-3-oxobutyl phosphate from D-ribulose 5-phosphate: step 1/1. Its function is as follows. Catalyzes the conversion of D-ribulose 5-phosphate to formate and 3,4-dihydroxy-2-butanone 4-phosphate. This is 3,4-dihydroxy-2-butanone 4-phosphate synthase from Shewanella sp. (strain W3-18-1).